The sequence spans 96 residues: Basic blue protein (96 aa).

The Phytocyanin domain occupies 1-96; sequence AVYVVGGSGG…SGMKIAVNAL (96 aa). Cu cation-binding residues include His39, Cys79, His84, and Met89. Cysteines 52 and 85 form a disulfide.

The polypeptide is Basic blue protein (Cucumis sativus (Cucumber)).